A 380-amino-acid polypeptide reads, in one-letter code: Queuine tRNA-ribosyltransferase (380 aa).

Catalysis depends on D96, which acts as the Proton acceptor. Residues 96-100 (DSGGF), D150, Q193, and G220 contribute to the substrate site. Positions 251 to 257 (GVGAPDS) are RNA binding. The active-site Nucleophile is the D270. Residues 275-279 (TRIAR) form an RNA binding; important for wobble base 34 recognition region. Zn(2+)-binding residues include C308, C310, C313, and H339.

The protein belongs to the queuine tRNA-ribosyltransferase family. Homodimer. Within each dimer, one monomer is responsible for RNA recognition and catalysis, while the other monomer binds to the replacement base PreQ1. Zn(2+) is required as a cofactor.

It carries out the reaction 7-aminomethyl-7-carbaguanine + guanosine(34) in tRNA = 7-aminomethyl-7-carbaguanosine(34) in tRNA + guanine. It functions in the pathway tRNA modification; tRNA-queuosine biosynthesis. In terms of biological role, catalyzes the base-exchange of a guanine (G) residue with the queuine precursor 7-aminomethyl-7-deazaguanine (PreQ1) at position 34 (anticodon wobble position) in tRNAs with GU(N) anticodons (tRNA-Asp, -Asn, -His and -Tyr). Catalysis occurs through a double-displacement mechanism. The nucleophile active site attacks the C1' of nucleotide 34 to detach the guanine base from the RNA, forming a covalent enzyme-RNA intermediate. The proton acceptor active site deprotonates the incoming PreQ1, allowing a nucleophilic attack on the C1' of the ribose to form the product. After dissociation, two additional enzymatic reactions on the tRNA convert PreQ1 to queuine (Q), resulting in the hypermodified nucleoside queuosine (7-(((4,5-cis-dihydroxy-2-cyclopenten-1-yl)amino)methyl)-7-deazaguanosine). The polypeptide is Queuine tRNA-ribosyltransferase (Streptococcus thermophilus (strain CNRZ 1066)).